The primary structure comprises 493 residues: Stage V sporulation protein AF (493 aa).

5 helical membrane-spanning segments follow: residues 296–316, 334–354, 363–383, 387–407, and 418–438; these read FFGI…VLQP, IPII…RMAA, TAMG…VGLF, VILY…YELS, and MILV…VLII.

The protein belongs to the GerABKA family.

It localises to the cell membrane. This Bacillus subtilis (strain 168) protein is Stage V sporulation protein AF (spoVAF).